Reading from the N-terminus, the 68-residue chain is uncharacterized protein (68 aa).

The disordered stretch occupies residues 1-20; the sequence is MYKQKKKNHPFQCKKKKKKK. The chain crosses the membrane as a helical span at residues 27 to 44; it reads IKLLFNYFLFFNFIITTF.

Its subcellular location is the membrane. This is an uncharacterized protein from Dictyostelium discoideum (Social amoeba).